We begin with the raw amino-acid sequence, 113 residues long: T cell receptor alpha variable 8-6 (113 aa).

A signal peptide spans 1–20 (MLLLLVPAFQVIFTLGGTRA). The region spanning 21 to 113 (QSVTQLDSQV…DTAEYFCAVS (93 aa)) is the Ig-like domain. The cysteines at positions 42 and 110 are disulfide-linked. N-linked (GlcNAc...) asparagine glycosylation is found at Asn43 and Asn87.

As to quaternary structure, alpha-beta TR is a heterodimer composed of an alpha and beta chain; disulfide-linked. The alpha-beta TR is associated with the transmembrane signaling CD3 coreceptor proteins to form the TR-CD3 (TcR or TCR). The assembly of alpha-beta TR heterodimers with CD3 occurs in the endoplasmic reticulum where a single alpha-beta TR heterodimer associates with one CD3D-CD3E heterodimer, one CD3G-CD3E heterodimer and one CD247 homodimer forming a stable octameric structure. CD3D-CD3E and CD3G-CD3E heterodimers preferentially associate with TR alpha and TR beta chains, respectively. The association of the CD247 homodimer is the last step of TcR assembly in the endoplasmic reticulum and is required for transport to the cell surface.

The protein resides in the cell membrane. In terms of biological role, v region of the variable domain of T cell receptor (TR) alpha chain that participates in the antigen recognition. Alpha-beta T cell receptors are antigen specific receptors which are essential to the immune response and are present on the cell surface of T lymphocytes. Recognize peptide-major histocompatibility (MH) (pMH) complexes that are displayed by antigen presenting cells (APC), a prerequisite for efficient T cell adaptive immunity against pathogens. Binding of alpha-beta TR to pMH complex initiates TR-CD3 clustering on the cell surface and intracellular activation of LCK that phosphorylates the ITAM motifs of CD3G, CD3D, CD3E and CD247 enabling the recruitment of ZAP70. In turn ZAP70 phosphorylates LAT, which recruits numerous signaling molecules to form the LAT signalosome. The LAT signalosome propagates signal branching to three major signaling pathways, the calcium, the mitogen-activated protein kinase (MAPK) kinase and the nuclear factor NF-kappa-B (NF-kB) pathways, leading to the mobilization of transcription factors that are critical for gene expression and essential for T cell growth and differentiation. The T cell repertoire is generated in the thymus, by V-(D)-J rearrangement. This repertoire is then shaped by intrathymic selection events to generate a peripheral T cell pool of self-MH restricted, non-autoaggressive T cells. Post-thymic interaction of alpha-beta TR with the pMH complexes shapes TR structural and functional avidity. This is T cell receptor alpha variable 8-6 from Homo sapiens (Human).